The chain runs to 240 residues: DNA repair protein RecO (240 aa).

Belongs to the RecO family.

Involved in DNA repair and RecF pathway recombination. In Wolbachia sp. subsp. Drosophila simulans (strain wRi), this protein is DNA repair protein RecO.